The sequence spans 128 residues: MPERYAALLLVGAGGFVGATARFLVALVLPFIGTGFPFGTLAVNLAGCFLIGFISQLSVSSSLVSPELRLLLATGFCGGFTTFSSYMYEIMSLLRDGEIFYSTLYLLGSIVGGILCLYFGMQLAKLWA.

A run of 4 helical transmembrane segments spans residues 1–21 (MPER…GATA), 45–65 (LAGC…SLVS), 70–90 (LLLA…MYEI), and 99–119 (IFYS…CLYF). Glycine 78 and threonine 81 together coordinate Na(+).

This sequence belongs to the fluoride channel Fluc/FEX (TC 1.A.43) family.

It localises to the cell inner membrane. The catalysed reaction is fluoride(in) = fluoride(out). With respect to regulation, na(+) is not transported, but it plays an essential structural role and its presence is essential for fluoride channel function. Its function is as follows. Fluoride-specific ion channel. Important for reducing fluoride concentration in the cell, thus reducing its toxicity. The protein is Fluoride-specific ion channel FluC of Chlorobium phaeobacteroides (strain BS1).